A 241-amino-acid polypeptide reads, in one-letter code: Leucyl/phenylalanyl-tRNA--protein transferase (241 aa).

It belongs to the L/F-transferase family.

The protein resides in the cytoplasm. It carries out the reaction N-terminal L-lysyl-[protein] + L-leucyl-tRNA(Leu) = N-terminal L-leucyl-L-lysyl-[protein] + tRNA(Leu) + H(+). The enzyme catalyses N-terminal L-arginyl-[protein] + L-leucyl-tRNA(Leu) = N-terminal L-leucyl-L-arginyl-[protein] + tRNA(Leu) + H(+). The catalysed reaction is L-phenylalanyl-tRNA(Phe) + an N-terminal L-alpha-aminoacyl-[protein] = an N-terminal L-phenylalanyl-L-alpha-aminoacyl-[protein] + tRNA(Phe). In terms of biological role, functions in the N-end rule pathway of protein degradation where it conjugates Leu, Phe and, less efficiently, Met from aminoacyl-tRNAs to the N-termini of proteins containing an N-terminal arginine or lysine. The protein is Leucyl/phenylalanyl-tRNA--protein transferase of Neisseria meningitidis serogroup C / serotype 2a (strain ATCC 700532 / DSM 15464 / FAM18).